A 762-amino-acid chain; its full sequence is Probable inorganic carbon transporter subunit DabA (762 aa).

Zn(2+) contacts are provided by Cys279, Asp281, His461, and Cys476.

The protein belongs to the inorganic carbon transporter (TC 9.A.2) DabA family. As to quaternary structure, forms a complex with DabB. Zn(2+) is required as a cofactor.

The protein localises to the cell inner membrane. In terms of biological role, part of an energy-coupled inorganic carbon pump. This is Probable inorganic carbon transporter subunit DabA from Legionella pneumophila subsp. pneumophila (strain Philadelphia 1 / ATCC 33152 / DSM 7513).